Consider the following 3291-residue polypeptide: Protocadherin-16 (3291 aa).

An N-terminal signal peptide occupies residues Met-1–Trp-35. Over Gly-36 to Ala-2933 the chain is Extracellular. Cadherin domains are found at residues Gln-37–Phe-137, Pro-138–Phe-249, Asn-250–Met-356, Val-369–Phe-466, Leu-476–Phe-572, Gln-573–Phe-679, Tyr-680–Phe-784, Glu-785–Phe-888, Pro-889–Phe-994, Asp-995–Phe-1105, Ser-1100–Phe-1205, Ile-1218–Leu-1317, Val-1326–Phe-1429, Ala-1430–Phe-1539, Phe-1539–Phe-1642, Pro-1643–Phe-1744, Gly-1745–Phe-1848, Pro-1849–Phe-1953, Leu-1976–Phe-2061, Pro-2062–Phe-2164, Leu-2165–Ile-2270, Ile-2270–Phe-2369, Ser-2370–Phe-2475, Thr-2476–Phe-2595, Thr-2596–Phe-2699, Pro-2700–Phe-2806, and Leu-2807–Leu-2926. The N-linked (GlcNAc...) asparagine glycan is linked to Asn-396. N-linked (GlcNAc...) asparagine glycosylation is present at Asn-2354. A disordered region spans residues Ser-2867–Glu-2886. A helical transmembrane segment spans residues Val-2934–Val-2954. Residues Arg-2955 to Ile-3291 lie on the Cytoplasmic side of the membrane. Residues Ser-2978–Glu-3033 form a disordered region. Positions Gly-3004–Pro-3013 are enriched in gly residues. Phosphoserine is present on Ser-3048. Disordered regions lie at residues Ser-3051–Thr-3081 and Ala-3226–Ile-3291. The span at Ser-3237–Pro-3259 shows a compositional bias: low complexity. Positions Pro-3270 to Ser-3279 are enriched in polar residues.

As to quaternary structure, heterophilic interaction with FAT4; this interaction affects their respective protein levels. Expressed in the epicardium and atrioventricular sulcus (at protein level).

It is found in the cell membrane. Functionally, calcium-dependent cell-adhesion protein. Mediates functions in neuroprogenitor cell proliferation and differentiation. In the heart, has a critical role for proper morphogenesis of the mitral valve, acting in the regulation of cell migration involved in valve formation. This chain is Protocadherin-16 (Dchs1), found in Mus musculus (Mouse).